Reading from the N-terminus, the 98-residue chain is NADH-ubiquinone oxidoreductase chain 4L (98 aa).

The next 3 helical transmembrane spans lie at 1–21 (MLAINLNLTVAFMLALTGVLV), 25–45 (HLMSTLLCLEGMMLSLFILMT), and 57–79 (SMAPLILLVFSACEAGVGLALLV).

It belongs to the complex I subunit 4L family. Core subunit of respiratory chain NADH dehydrogenase (Complex I) which is composed of 45 different subunits.

The protein resides in the mitochondrion inner membrane. The enzyme catalyses a ubiquinone + NADH + 5 H(+)(in) = a ubiquinol + NAD(+) + 4 H(+)(out). In terms of biological role, core subunit of the mitochondrial membrane respiratory chain NADH dehydrogenase (Complex I) which catalyzes electron transfer from NADH through the respiratory chain, using ubiquinone as an electron acceptor. Part of the enzyme membrane arm which is embedded in the lipid bilayer and involved in proton translocation. This chain is NADH-ubiquinone oxidoreductase chain 4L (MT-ND4L), found in Dasyurus hallucatus (Northern quoll).